Consider the following 220-residue polypeptide: Deoxyribose-phosphate aldolase (220 aa).

The active-site Proton donor/acceptor is Asp89. The active-site Schiff-base intermediate with acetaldehyde is the Lys151. The active-site Proton donor/acceptor is Lys180.

Belongs to the DeoC/FbaB aldolase family. DeoC type 1 subfamily.

The protein localises to the cytoplasm. The enzyme catalyses 2-deoxy-D-ribose 5-phosphate = D-glyceraldehyde 3-phosphate + acetaldehyde. It participates in carbohydrate degradation; 2-deoxy-D-ribose 1-phosphate degradation; D-glyceraldehyde 3-phosphate and acetaldehyde from 2-deoxy-alpha-D-ribose 1-phosphate: step 2/2. Catalyzes a reversible aldol reaction between acetaldehyde and D-glyceraldehyde 3-phosphate to generate 2-deoxy-D-ribose 5-phosphate. The protein is Deoxyribose-phosphate aldolase of Streptococcus pneumoniae serotype 2 (strain D39 / NCTC 7466).